A 319-amino-acid polypeptide reads, in one-letter code: tRNA-cytidine(32) 2-sulfurtransferase (319 aa).

The short motif at 49 to 54 (SGGKDS) is the PP-loop motif element. [4Fe-4S] cluster contacts are provided by Cys-124, Cys-127, and Cys-215. A disordered region spans residues 276 to 319 (DGDTAFDKEEFRDPAPDADDVEDAPKKRTISILDSRGKESGCGA). Basic and acidic residues-rich tracts occupy residues 280 to 290 (AFDKEEFRDPA) and 310 to 319 (SRGKESGCGA).

The protein belongs to the TtcA family. Homodimer. Mg(2+) is required as a cofactor. The cofactor is [4Fe-4S] cluster.

Its subcellular location is the cytoplasm. The enzyme catalyses cytidine(32) in tRNA + S-sulfanyl-L-cysteinyl-[cysteine desulfurase] + AH2 + ATP = 2-thiocytidine(32) in tRNA + L-cysteinyl-[cysteine desulfurase] + A + AMP + diphosphate + H(+). Its pathway is tRNA modification. Catalyzes the ATP-dependent 2-thiolation of cytidine in position 32 of tRNA, to form 2-thiocytidine (s(2)C32). The sulfur atoms are provided by the cysteine/cysteine desulfurase (IscS) system. The protein is tRNA-cytidine(32) 2-sulfurtransferase of Chromobacterium violaceum (strain ATCC 12472 / DSM 30191 / JCM 1249 / CCUG 213 / NBRC 12614 / NCIMB 9131 / NCTC 9757 / MK).